The sequence spans 312 residues: Glycerol-3-phosphate dehydrogenase [NAD(P)+] (312 aa).

NADPH is bound by residues Trp-11, Arg-30, Arg-31, and Lys-95. Sn-glycerol 3-phosphate-binding residues include Lys-95, Gly-123, and Ser-125. Ala-127 contacts NADPH. Residues Lys-177, Asp-230, Ser-240, Arg-241, and Asn-242 each contribute to the sn-glycerol 3-phosphate site. Lys-177 functions as the Proton acceptor in the catalytic mechanism. Arg-241 lines the NADPH pocket. Positions 265 and 267 each coordinate NADPH.

The protein belongs to the NAD-dependent glycerol-3-phosphate dehydrogenase family.

The protein localises to the cytoplasm. The enzyme catalyses sn-glycerol 3-phosphate + NAD(+) = dihydroxyacetone phosphate + NADH + H(+). The catalysed reaction is sn-glycerol 3-phosphate + NADP(+) = dihydroxyacetone phosphate + NADPH + H(+). The protein operates within membrane lipid metabolism; glycerophospholipid metabolism. Its function is as follows. Catalyzes the reduction of the glycolytic intermediate dihydroxyacetone phosphate (DHAP) to sn-glycerol 3-phosphate (G3P), the key precursor for phospholipid synthesis. The sequence is that of Glycerol-3-phosphate dehydrogenase [NAD(P)+] from Helicobacter pylori (strain HPAG1).